Consider the following 177-residue polypeptide: NADH-quinone oxidoreductase subunit B (177 aa).

Residues Cys56, Cys57, Cys121, and Cys151 each coordinate [4Fe-4S] cluster.

This sequence belongs to the complex I 20 kDa subunit family. In terms of assembly, NDH-1 is composed of 14 different subunits. Subunits NuoB, C, D, E, F, and G constitute the peripheral sector of the complex. [4Fe-4S] cluster is required as a cofactor.

It is found in the cell inner membrane. The catalysed reaction is a quinone + NADH + 5 H(+)(in) = a quinol + NAD(+) + 4 H(+)(out). NDH-1 shuttles electrons from NADH, via FMN and iron-sulfur (Fe-S) centers, to quinones in the respiratory chain. The immediate electron acceptor for the enzyme in this species is believed to be ubiquinone. Couples the redox reaction to proton translocation (for every two electrons transferred, four hydrogen ions are translocated across the cytoplasmic membrane), and thus conserves the redox energy in a proton gradient. The protein is NADH-quinone oxidoreductase subunit B of Rhodobacter capsulatus (Rhodopseudomonas capsulata).